Consider the following 178-residue polypeptide: Ribosome maturation factor RimP (178 aa).

Belongs to the RimP family.

It is found in the cytoplasm. Its function is as follows. Required for maturation of 30S ribosomal subunits. In Caulobacter vibrioides (strain ATCC 19089 / CIP 103742 / CB 15) (Caulobacter crescentus), this protein is Ribosome maturation factor RimP.